The sequence spans 422 residues: Metallocarboxypeptidase A (422 aa).

Residues 1 to 17 (MRSVLSLALLAANVVTA) form the signal peptide. The propeptide at 18 to 112 (AVVSPFDYSG…FEAYSAGYAP (95 aa)) is activation peptide. The 301-residue stretch at 119–419 (SYHSYQDHIS…AGTVAMLKAV (301 aa)) folds into the Peptidase M14 domain. Residues H179 and E182 each coordinate Zn(2+). Residues 179–182 (HARE), R237, and 254–255 (NR) contribute to the substrate site. The cysteines at positions 248 and 271 are disulfide-linked. A Zn(2+)-binding site is contributed by H309. 310 to 311 (SY) is a substrate binding site. Catalysis depends on E385, which acts as the Proton donor/acceptor.

Belongs to the peptidase M14 family. The cofactor is Zn(2+).

The protein localises to the secreted. Its function is as follows. Extracellular metalloprotease that contributes to pathogenicity. In Trichophyton tonsurans (Scalp ringworm fungus), this protein is Metallocarboxypeptidase A (MCPA).